The chain runs to 41 residues: LLMPVKPNDDRVIGCWCISRGYLCGCMPCKLNDDSLCGRKG.

3 disulfides stabilise this stretch: Cys-15/Cys-26, Cys-17/Cys-24, and Cys-29/Cys-37.

Functionally, has two active sites that simultaneously bind and inhibit trypsin. This is Trypsin inhibitor from Trichosanthes kirilowii (Chinese snake gourd).